Consider the following 132-residue polypeptide: MVMTDPIADFLTRIRNANMAKHESLEVPASKIKRDIAEILKNEGFVRDVEYIDDDKQGIIRVFLKYGKGNERVISGIRRISKPGLRSYVKADAVPKVLNGLGIAILSTSEGVITDKEARAKKIGGEVIAYIW.

It belongs to the universal ribosomal protein uS8 family. In terms of assembly, part of the 30S ribosomal subunit. Contacts proteins S5 and S12.

In terms of biological role, one of the primary rRNA binding proteins, it binds directly to 16S rRNA central domain where it helps coordinate assembly of the platform of the 30S subunit. This chain is Small ribosomal subunit protein uS8, found in Ligilactobacillus salivarius (strain UCC118) (Lactobacillus salivarius).